The chain runs to 209 residues: MVNSDYSLYLVTDRSLLQGRSLLEEVRKAVKGGVSMVQLREKEAGSREFYELAQTLQTELRELGVPLLINDRLDIALAVDADGLHLGQDDLPLPVARSLLGKEKIIGLSINKREEAREGEKMGADYLGVSPVFSTPTKADAPPATGLEFLASLRQEIKIPLVAIGGINKENLKMIKETGADGAAVISALMGASDIEGEARKLRQIWERN.

Residues 38 to 42 and Asn70 each bind 4-amino-2-methyl-5-(diphosphooxymethyl)pyrimidine; that span reads QLREK. The Mg(2+) site is built by Asp71 and Asp90. Ser109 lines the 4-amino-2-methyl-5-(diphosphooxymethyl)pyrimidine pocket. 135–137 contributes to the 2-[(2R,5Z)-2-carboxy-4-methylthiazol-5(2H)-ylidene]ethyl phosphate binding site; the sequence is TPT. Lys138 serves as a coordination point for 4-amino-2-methyl-5-(diphosphooxymethyl)pyrimidine. 2-[(2R,5Z)-2-carboxy-4-methylthiazol-5(2H)-ylidene]ethyl phosphate contacts are provided by residues Gly166 and 186–187; that span reads IS.

It belongs to the thiamine-phosphate synthase family. It depends on Mg(2+) as a cofactor.

It carries out the reaction 2-[(2R,5Z)-2-carboxy-4-methylthiazol-5(2H)-ylidene]ethyl phosphate + 4-amino-2-methyl-5-(diphosphooxymethyl)pyrimidine + 2 H(+) = thiamine phosphate + CO2 + diphosphate. The catalysed reaction is 2-(2-carboxy-4-methylthiazol-5-yl)ethyl phosphate + 4-amino-2-methyl-5-(diphosphooxymethyl)pyrimidine + 2 H(+) = thiamine phosphate + CO2 + diphosphate. It catalyses the reaction 4-methyl-5-(2-phosphooxyethyl)-thiazole + 4-amino-2-methyl-5-(diphosphooxymethyl)pyrimidine + H(+) = thiamine phosphate + diphosphate. It functions in the pathway cofactor biosynthesis; thiamine diphosphate biosynthesis; thiamine phosphate from 4-amino-2-methyl-5-diphosphomethylpyrimidine and 4-methyl-5-(2-phosphoethyl)-thiazole: step 1/1. Functionally, condenses 4-methyl-5-(beta-hydroxyethyl)thiazole monophosphate (THZ-P) and 2-methyl-4-amino-5-hydroxymethyl pyrimidine pyrophosphate (HMP-PP) to form thiamine monophosphate (TMP). This Syntrophomonas wolfei subsp. wolfei (strain DSM 2245B / Goettingen) protein is Thiamine-phosphate synthase.